The chain runs to 375 residues: Queuine tRNA-ribosyltransferase (375 aa).

Catalysis depends on Asp93, which acts as the Proton acceptor. Substrate is bound by residues 93-97, Asp147, Gln191, and Gly218; that span reads DSGGF. The tract at residues 249–255 is RNA binding; sequence GVGTPLD. Asp268 functions as the Nucleophile in the catalytic mechanism. Positions 273–277 are RNA binding; important for wobble base 34 recognition; that stretch reads TRNAR. 4 residues coordinate Zn(2+): Cys306, Cys308, Cys311, and His337.

The protein belongs to the queuine tRNA-ribosyltransferase family. As to quaternary structure, homodimer. Within each dimer, one monomer is responsible for RNA recognition and catalysis, while the other monomer binds to the replacement base PreQ1. Zn(2+) is required as a cofactor.

It carries out the reaction 7-aminomethyl-7-carbaguanine + guanosine(34) in tRNA = 7-aminomethyl-7-carbaguanosine(34) in tRNA + guanine. It participates in tRNA modification; tRNA-queuosine biosynthesis. In terms of biological role, catalyzes the base-exchange of a guanine (G) residue with the queuine precursor 7-aminomethyl-7-deazaguanine (PreQ1) at position 34 (anticodon wobble position) in tRNAs with GU(N) anticodons (tRNA-Asp, -Asn, -His and -Tyr). Catalysis occurs through a double-displacement mechanism. The nucleophile active site attacks the C1' of nucleotide 34 to detach the guanine base from the RNA, forming a covalent enzyme-RNA intermediate. The proton acceptor active site deprotonates the incoming PreQ1, allowing a nucleophilic attack on the C1' of the ribose to form the product. After dissociation, two additional enzymatic reactions on the tRNA convert PreQ1 to queuine (Q), resulting in the hypermodified nucleoside queuosine (7-(((4,5-cis-dihydroxy-2-cyclopenten-1-yl)amino)methyl)-7-deazaguanosine). This chain is Queuine tRNA-ribosyltransferase, found in Nitratidesulfovibrio vulgaris (strain DP4) (Desulfovibrio vulgaris).